The sequence spans 276 residues: Shikimate dehydrogenase (NADP(+)) (276 aa).

Shikimate is bound by residues 15–17 (SKS) and Thr-62. Lys-66 serves as the catalytic Proton acceptor. Glu-78 is a binding site for NADP(+). Shikimate contacts are provided by Asn-87 and Asp-103. NADP(+) contacts are provided by residues 128–132 (GAGGA) and Ile-217. Shikimate is bound at residue Tyr-219. Gly-240 lines the NADP(+) pocket.

Belongs to the shikimate dehydrogenase family. Homodimer.

The catalysed reaction is shikimate + NADP(+) = 3-dehydroshikimate + NADPH + H(+). Its pathway is metabolic intermediate biosynthesis; chorismate biosynthesis; chorismate from D-erythrose 4-phosphate and phosphoenolpyruvate: step 4/7. Involved in the biosynthesis of the chorismate, which leads to the biosynthesis of aromatic amino acids. Catalyzes the reversible NADPH linked reduction of 3-dehydroshikimate (DHSA) to yield shikimate (SA). This chain is Shikimate dehydrogenase (NADP(+)), found in Lysinibacillus sphaericus (strain C3-41).